The chain runs to 130 residues: MKFRKGRPKIPRLISEEPQFKLFKPAGTPGTELESEVLTFEELESLRLVDYLNQPHEEAADAMGISRRVFWNILKSARKKVADALINGKMIDIGGGYYKIRECNYEDECQRGRNCRYGVSNCLTLKKDSE.

This sequence belongs to the UPF0251 family.

This Methanococcus maripaludis (strain C7 / ATCC BAA-1331) protein is UPF0251 protein MmarC7_1642.